Consider the following 653-residue polypeptide: Probable sulfate transporter 3.4 (653 aa).

The Cytoplasmic portion of the chain corresponds to 1 to 92; that stretch reads MGHGTNRVED…QYDLKLLRSD (92 aa). Residues 93 to 113 traverse the membrane as a helical segment; it reads VISGLTIASLAIPQGISYAKL. Topologically, residues 114-115 are extracellular; the sequence is AN. The chain crosses the membrane as a helical span at residues 116–136; it reads LPPIVGLYSSFVPPLIYAVLG. The Cytoplasmic portion of the chain corresponds to 137–140; it reads SSRH. A helical transmembrane segment spans residues 141-161; that stretch reads LAVGPVSIASLVMGSMLSESV. The Extracellular segment spans residues 162–167; sequence SPTQDS. Residues 168–188 form a helical membrane-spanning segment; it reads ILYLKLAFTSTFFAGVFQASL. Residues 189-194 lie on the Cytoplasmic side of the membrane; sequence GLLRLG. The helical transmembrane segment at 195–215 threads the bilayer; the sequence is FMIDFLSKATLIGFTAGAAVI. Residues 216-247 are Extracellular-facing; it reads VSLQQLKGLLGIVHFTGKMQIVPVMSSVFNHR. Residues 248-268 form a helical membrane-spanning segment; it reads SEWSWETIVMGIGFLSILLTT. Over 269–279 the chain is Cytoplasmic; sequence RHISMRKPKLF. The helical transmembrane segment at 280 to 300 threads the bilayer; that stretch reads WISAASPLASVIISTLLVYLI. Residues 301–331 are Extracellular-facing; the sequence is RSKTHAISFIGHLPKGLNPPSLNMLYFSGAH. Residues 332 to 352 traverse the membrane as a helical segment; it reads LALAIKTGIITGILSLTEGIA. Topologically, residues 353 to 370 are cytoplasmic; that stretch reads VGRTFASLKNYQVNGNKE. A helical transmembrane segment spans residues 371 to 391; sequence MMAIGFMNMAGSCTSCYVTTG. Topologically, residues 392 to 407 are extracellular; that stretch reads SFSRSAVNYNAGAKTA. A helical membrane pass occupies residues 408 to 428; that stretch reads VSNIVMASAVLVTLLFLMPLF. Topologically, residues 429 to 433 are cytoplasmic; that stretch reads YYTPN. The helical transmembrane segment at 434–454 threads the bilayer; the sequence is VILAAIILTAVIGLIDYQAAY. Over 455 to 471 the chain is Extracellular; that stretch reads KLWKVDKFDFFTCLCSF. Residues 472-492 traverse the membrane as a helical segment; it reads FGVLFVSVPLGLAIAVAVSVI. Topologically, residues 493–653 are cytoplasmic; that stretch reads KILLHVTRPN…SSTWKANGQP (161 aa). Positions 520-643 constitute an STAS domain; it reads RYREASRIPG…LTVGEAVADL (124 aa).

It belongs to the SLC26A/SulP transporter (TC 2.A.53) family.

The protein resides in the membrane. Functionally, h(+)/sulfate cotransporter that may play a role in the regulation of sulfate assimilation. The protein is Probable sulfate transporter 3.4 (SULTR3;4) of Arabidopsis thaliana (Mouse-ear cress).